Reading from the N-terminus, the 113-residue chain is UPF0212 protein MmarC6_1165 (113 aa).

Belongs to the UPF0212 family.

This is UPF0212 protein MmarC6_1165 from Methanococcus maripaludis (strain C6 / ATCC BAA-1332).